The following is a 251-amino-acid chain: uncharacterized protein (251 aa).

Residues histidine 5, histidine 7, glutamate 101, histidine 132, histidine 163, and aspartate 209 each coordinate a divalent metal cation.

Belongs to the metallo-dependent hydrolases superfamily. TatD-type hydrolase family. It depends on a divalent metal cation as a cofactor.

This is an uncharacterized protein from Methanocaldococcus jannaschii (strain ATCC 43067 / DSM 2661 / JAL-1 / JCM 10045 / NBRC 100440) (Methanococcus jannaschii).